Consider the following 438-residue polypeptide: Transmembrane protease serine 11F (438 aa).

Residues 1 to 32 (MMYAPVEFSEAEFSRAEYQRKQQFWDSVRLAL) lie on the Cytoplasmic side of the membrane. A helical; Signal-anchor for type II membrane protein transmembrane segment spans residues 33 to 53 (FTLAIVAIIGIAIGIVTHFVV). Residues 54 to 438 (EDDKSFYYLA…RDWIASKTGM (385 aa)) are Extracellular-facing. One can recognise an SEA domain in the interval 57–175 (KSFYYLASFK…PSFRLTPIDS (119 aa)). The Peptidase S1 domain maps to 206-437 (IVQGRETAME…YRDWIASKTG (232 aa)). Cys233 and Cys249 form a disulfide bridge. Catalysis depends on charge relay system residues His248 and Asp293. Cystine bridges form between Cys358–Cys374 and Cys385–Cys413. Catalysis depends on Ser389, which acts as the Charge relay system.

This sequence belongs to the peptidase S1 family.

It is found in the membrane. In terms of biological role, probable serine protease. The sequence is that of Transmembrane protease serine 11F (TMPRSS11F) from Homo sapiens (Human).